We begin with the raw amino-acid sequence, 1204 residues long: Exportin-5 (1204 aa).

Ala-2 bears the N-acetylalanine mark. The interval 2–108 (AMDQVNALCE…ANGTLNILEE (107 aa)) is necessary for interaction with Ran. N6-acetyllysine is present on Lys-396. The interval 533 to 640 (ELLQMVLNFD…KQLLSNELLL (108 aa)) is necessary for interaction with ILF3. Residues 641–642 (TQ) are pre-miRNA binding. Ser-826 is subject to Phosphoserine.

This sequence belongs to the exportin family. Component of a nuclear export receptor complex composed of XPO5, RAN, dsRNA-binding proteins and dsRNA. Found in a nuclear export complex with XPO5, RAN, EEF1A1, and aminoacylated tRNA. Found in a nuclear export complex with XPO5, RAN, ILF3 and dsRNA. Found in a nuclear export complex with XPO5, RAN and pre-miRNA. Found in a nuclear export complex with XPO5, RAN, ILF3 and minihelix VA1 dsRNA. Found in a nuclear export complex with XPO5, RAN, ILF3, ZNF346 and dsRNA. Interacts with EEF1A1, ILF3, NUP153, NUP214 and ZNF346. Interacts with RAN and cargo proteins in a GTP-dependent manner. Interacts with isoform 5 of ADAR/ADAR1 (via DRBM domains). Interacts with SMAD4; mediates nuclear export of SMAD4. Interacts with RAN (GTP-bound form). Expressed in heart, brain, placenta, lung, skeletal muscle, kidney and pancreas.

Its subcellular location is the nucleus. It localises to the cytoplasm. In terms of biological role, mediates the nuclear export of proteins bearing a double-stranded RNA binding domain (dsRBD) and double-stranded RNAs (cargos). XPO5 in the nucleus binds cooperatively to the RNA and to the GTPase Ran in its active GTP-bound form. Proteins containing dsRBDs can associate with this trimeric complex through the RNA. Docking of this complex to the nuclear pore complex (NPC) is mediated through binding to nucleoporins. Upon transit of a nuclear export complex into the cytoplasm, hydrolysis of Ran-GTP to Ran-GDP (induced by RANBP1 and RANGAP1, respectively) cause disassembly of the complex and release of the cargo from the export receptor. XPO5 then returns to the nuclear compartment by diffusion through the nuclear pore complex, to mediate another round of transport. The directionality of nuclear export is thought to be conferred by an asymmetric distribution of the GTP- and GDP-bound forms of Ran between the cytoplasm and nucleus. Overexpression may in some circumstances enhance RNA-mediated gene silencing (RNAi). Mediates nuclear export of isoform 5 of ADAR/ADAR1 in a RanGTP-dependent manner. Functionally, mediates the nuclear export of micro-RNA precursors, which form short hairpins. Also mediates the nuclear export of synthetic short hairpin RNAs used for RNA interference. In some circumstances can also mediate the nuclear export of deacylated and aminoacylated tRNAs. Specifically recognizes dsRNAs that lack a 5'-overhang in a sequence-independent manner, have only a short 3'-overhang, and that have a double-stranded length of at least 15 base-pairs. Binding is dependent on Ran-GTP. (Microbial infection) Mediates the nuclear export of adenovirus VA1 dsRNA. The sequence is that of Exportin-5 (XPO5) from Homo sapiens (Human).